The primary structure comprises 88 residues: Cytochrome c oxidase subunit 6B2 (88 aa).

Residues 29-75 (TRNCYQNFLDYHRCIKTMNRRGKSTQPCEYYFRVYHSLCPISWVQRW) enclose the CHCH domain. The short motif at 32–42 (CYQNFLDYHRC) is the Cx9C motif element. Intrachain disulfides connect C32–C67 and C42–C56. Positions 56 to 67 (CEYYFRVYHSLC) match the Cx10C motif motif.

Belongs to the cytochrome c oxidase subunit 6B family. Component of the cytochrome c oxidase (complex IV, CIV), a multisubunit enzyme composed of 14 subunits. The complex is composed of a catalytic core of 3 subunits MT-CO1, MT-CO2 and MT-CO3, encoded in the mitochondrial DNA, and 11 supernumerary subunits COX4I1 (or COX4I2), COX5A, COX5B, COX6A2 (or COX6A1), COX6B1 (or COX6B2), COX6C, COX7A1 (or COX7A2), COX7B, COX7C, COX8B and NDUFA4, which are encoded in the nuclear genome. The complex exists as a monomer or a dimer and forms supercomplexes (SCs) in the inner mitochondrial membrane with NADH-ubiquinone oxidoreductase (complex I, CI) and ubiquinol-cytochrome c oxidoreductase (cytochrome b-c1 complex, complex III, CIII), resulting in different assemblies (supercomplex SCI(1)III(2)IV(1) and megacomplex MCI(2)III(2)IV(2)). In terms of tissue distribution, testis specific.

The protein resides in the mitochondrion inner membrane. It functions in the pathway energy metabolism; oxidative phosphorylation. In terms of biological role, component of the cytochrome c oxidase, the last enzyme in the mitochondrial electron transport chain which drives oxidative phosphorylation. The respiratory chain contains 3 multisubunit complexes succinate dehydrogenase (complex II, CII), ubiquinol-cytochrome c oxidoreductase (cytochrome b-c1 complex, complex III, CIII) and cytochrome c oxidase (complex IV, CIV), that cooperate to transfer electrons derived from NADH and succinate to molecular oxygen, creating an electrochemical gradient over the inner membrane that drives transmembrane transport and the ATP synthase. Cytochrome c oxidase is the component of the respiratory chain that catalyzes the reduction of oxygen to water. Electrons originating from reduced cytochrome c in the intermembrane space (IMS) are transferred via the dinuclear copper A center (CU(A)) of subunit 2 and heme A of subunit 1 to the active site in subunit 1, a binuclear center (BNC) formed by heme A3 and copper B (CU(B)). The BNC reduces molecular oxygen to 2 water molecules using 4 electrons from cytochrome c in the IMS and 4 protons from the mitochondrial matrix. This is Cytochrome c oxidase subunit 6B2 (COX6B2) from Bos taurus (Bovine).